The sequence spans 361 residues: NAD-dependent protein deacetylase hst2-1 (361 aa).

One can recognise a Deacetylase sirtuin-type domain in the interval 16–276 (SVLEARTVEA…RKLARALGWE (261 aa)). Residues 43-63 (GAGISTAAGIPDFRSPDTGIY) and 126-129 (QNID) contribute to the NAD(+) site. His-146 serves as the catalytic Proton acceptor. Cys-154, Cys-157, Cys-178, and Cys-181 together coordinate Zn(2+). NAD(+) is bound by residues 217–219 (GTS), 242–244 (NRE), and Cys-262. The stretch at 294–328 (EEELATPRTREERLENEISRLTAEIDKTLKISDAY) forms a coiled coil. Residues 335–361 (RLEGEPLSSPESNGTGLAHVFPHLARR) are disordered.

The protein belongs to the sirtuin family. Class I subfamily. Zn(2+) serves as cofactor.

It localises to the cytoplasm. The protein resides in the nucleus. The catalysed reaction is N(6)-acetyl-L-lysyl-[protein] + NAD(+) + H2O = 2''-O-acetyl-ADP-D-ribose + nicotinamide + L-lysyl-[protein]. NAD-dependent histone deacetylase, which could function in telomeric silencing, cell cycle progression and chromosome stability. This chain is NAD-dependent protein deacetylase hst2-1, found in Emericella nidulans (strain FGSC A4 / ATCC 38163 / CBS 112.46 / NRRL 194 / M139) (Aspergillus nidulans).